A 163-amino-acid polypeptide reads, in one-letter code: MAKESSFDIVSKVELPEVQNAVQAALKEIKNRYDFKGSKSDISLEKEELVLISDDDFKLEQLKDVLVTKLIKRNVPTKNIDYGKTEHALGGTVRQRAKLISGIDQDNAKKINALIKQSGIKVKSQFQDDQVRVTGKNKDDLQEVISLMRKADLPIDVQFINFR.

Belongs to the YajQ family.

In terms of biological role, nucleotide-binding protein. This chain is Nucleotide-binding protein BPUM_1028, found in Bacillus pumilus (strain SAFR-032).